The primary structure comprises 134 residues: Small ribosomal subunit protein uS8c (134 aa).

Belongs to the universal ribosomal protein uS8 family. In terms of assembly, part of the 30S ribosomal subunit.

The protein localises to the plastid. It localises to the chloroplast. One of the primary rRNA binding proteins, it binds directly to 16S rRNA central domain where it helps coordinate assembly of the platform of the 30S subunit. This chain is Small ribosomal subunit protein uS8c (rps8), found in Nicotiana tomentosiformis (Tobacco).